Reading from the N-terminus, the 211-residue chain is Small ribosomal subunit protein uS3 (211 aa).

A KH type-2 domain is found at 39–107 (VTKYVESSFA…VPSLNVVEVK (69 aa)).

The protein belongs to the universal ribosomal protein uS3 family. In terms of assembly, part of the 30S ribosomal subunit. Forms a tight complex with proteins S10 and S14.

Its function is as follows. Binds the lower part of the 30S subunit head. Binds mRNA in the 70S ribosome, positioning it for translation. The polypeptide is Small ribosomal subunit protein uS3 (Neorickettsia sennetsu (strain ATCC VR-367 / Miyayama) (Ehrlichia sennetsu)).